The sequence spans 380 residues: ATPase ASNA1 homolog (380 aa).

48 to 55 is a binding site for ATP; that stretch reads KGGVGKTT. The active site involves Asp-77. Positions 248 and 275 each coordinate ATP.

Belongs to the arsA ATPase family. Homodimer.

It is found in the cytoplasm. The protein localises to the endoplasmic reticulum. Functionally, ATPase required for the post-translational delivery of tail-anchored (TA) proteins to the endoplasmic reticulum. Recognizes and selectively binds the transmembrane domain of TA proteins in the cytosol. This complex then targets to the endoplasmic reticulum by membrane-bound receptors, where the tail-anchored protein is released for insertion. This process is regulated by ATP binding and hydrolysis. ATP binding drives the homodimer towards the closed dimer state, facilitating recognition of newly synthesized TA membrane proteins. ATP hydrolysis is required for insertion. Subsequently, the homodimer reverts towards the open dimer state, lowering its affinity for the membrane-bound receptor, and returning it to the cytosol to initiate a new round of targeting. This is ATPase ASNA1 homolog from Plasmodium yoelii yoelii.